The following is a 211-amino-acid chain: Large ribosomal subunit protein uL3 (211 aa).

This sequence belongs to the universal ribosomal protein uL3 family. As to quaternary structure, part of the 50S ribosomal subunit. Forms a cluster with proteins L14 and L19.

In terms of biological role, one of the primary rRNA binding proteins, it binds directly near the 3'-end of the 23S rRNA, where it nucleates assembly of the 50S subunit. This is Large ribosomal subunit protein uL3 from Trichlorobacter lovleyi (strain ATCC BAA-1151 / DSM 17278 / SZ) (Geobacter lovleyi).